The primary structure comprises 324 residues: Quinolinate synthase 1 (324 aa).

Residues His48 and Ser66 each coordinate iminosuccinate. Cys111 serves as a coordination point for [4Fe-4S] cluster. Iminosuccinate contacts are provided by residues 137–139 (YVN) and Ser154. Cys196 is a [4Fe-4S] cluster binding site. Iminosuccinate contacts are provided by residues 222 to 224 (HPE) and Thr239. Cys282 is a binding site for [4Fe-4S] cluster.

Belongs to the quinolinate synthase family. Type 2 subfamily. [4Fe-4S] cluster serves as cofactor.

The protein resides in the cytoplasm. The enzyme catalyses iminosuccinate + dihydroxyacetone phosphate = quinolinate + phosphate + 2 H2O + H(+). Its pathway is cofactor biosynthesis; NAD(+) biosynthesis; quinolinate from iminoaspartate: step 1/1. Functionally, catalyzes the condensation of iminoaspartate with dihydroxyacetone phosphate to form quinolinate. The sequence is that of Quinolinate synthase 1 from Mesorhizobium japonicum (strain LMG 29417 / CECT 9101 / MAFF 303099) (Mesorhizobium loti (strain MAFF 303099)).